Here is a 426-residue protein sequence, read N- to C-terminus: Chaperone SurA (426 aa).

The first 13 residues, 1–13 (MLGALFLGTAANA), serve as a signal peptide directing secretion. 2 consecutive PpiC domains span residues 164–265 (SEEL…KLLE) and 274–373 (RDEV…EVLG).

The protein localises to the periplasm. It carries out the reaction [protein]-peptidylproline (omega=180) = [protein]-peptidylproline (omega=0). Chaperone involved in the correct folding and assembly of outer membrane proteins. Recognizes specific patterns of aromatic residues and the orientation of their side chains, which are found more frequently in integral outer membrane proteins. May act in both early periplasmic and late outer membrane-associated steps of protein maturation. This is Chaperone SurA from Pseudomonas fluorescens (strain Pf0-1).